Consider the following 98-residue polypeptide: Co-chaperonin GroES (98 aa).

The protein belongs to the GroES chaperonin family. Heptamer of 7 subunits arranged in a ring. Interacts with the chaperonin GroEL.

The protein localises to the cytoplasm. Together with the chaperonin GroEL, plays an essential role in assisting protein folding. The GroEL-GroES system forms a nano-cage that allows encapsulation of the non-native substrate proteins and provides a physical environment optimized to promote and accelerate protein folding. GroES binds to the apical surface of the GroEL ring, thereby capping the opening of the GroEL channel. The sequence is that of Co-chaperonin GroES from Kineococcus radiotolerans (strain ATCC BAA-149 / DSM 14245 / SRS30216).